We begin with the raw amino-acid sequence, 485 residues long: 2-succinylbenzoate--CoA ligase (485 aa).

This sequence belongs to the ATP-dependent AMP-binding enzyme family. MenE subfamily.

It catalyses the reaction 2-succinylbenzoate + ATP + CoA = 2-succinylbenzoyl-CoA + AMP + diphosphate. It functions in the pathway quinol/quinone metabolism; 1,4-dihydroxy-2-naphthoate biosynthesis; 1,4-dihydroxy-2-naphthoate from chorismate: step 5/7. The protein operates within quinol/quinone metabolism; menaquinone biosynthesis. Converts 2-succinylbenzoate (OSB) to 2-succinylbenzoyl-CoA (OSB-CoA). This Enterococcus faecalis (strain ATCC 700802 / V583) protein is 2-succinylbenzoate--CoA ligase.